Consider the following 699-residue polypeptide: tRNA 5-methylaminomethyl-2-thiouridine biosynthesis bifunctional protein MnmC (699 aa).

A tRNA (mnm(5)s(2)U34)-methyltransferase region spans residues Met-1 to Asn-260. The FAD-dependent cmnm(5)s(2)U34 oxidoreductase stretch occupies residues Ile-282 to Leu-699.

It in the N-terminal section; belongs to the methyltransferase superfamily. tRNA (mnm(5)s(2)U34)-methyltransferase family. This sequence in the C-terminal section; belongs to the DAO family. Requires FAD as cofactor.

The protein localises to the cytoplasm. It carries out the reaction 5-aminomethyl-2-thiouridine(34) in tRNA + S-adenosyl-L-methionine = 5-methylaminomethyl-2-thiouridine(34) in tRNA + S-adenosyl-L-homocysteine + H(+). In terms of biological role, catalyzes the last two steps in the biosynthesis of 5-methylaminomethyl-2-thiouridine (mnm(5)s(2)U) at the wobble position (U34) in tRNA. Catalyzes the FAD-dependent demodification of cmnm(5)s(2)U34 to nm(5)s(2)U34, followed by the transfer of a methyl group from S-adenosyl-L-methionine to nm(5)s(2)U34, to form mnm(5)s(2)U34. The protein is tRNA 5-methylaminomethyl-2-thiouridine biosynthesis bifunctional protein MnmC of Shewanella oneidensis (strain ATCC 700550 / JCM 31522 / CIP 106686 / LMG 19005 / NCIMB 14063 / MR-1).